A 35-amino-acid chain; its full sequence is Photosystem II reaction center protein T (35 aa).

A helical transmembrane segment spans residues 3–23 (ALVYTFLLVSTLGIIFFAIFF).

This sequence belongs to the PsbT family. PSII is composed of 1 copy each of membrane proteins PsbA, PsbB, PsbC, PsbD, PsbE, PsbF, PsbH, PsbI, PsbJ, PsbK, PsbL, PsbM, PsbT, PsbY, PsbZ, Psb30/Ycf12, at least 3 peripheral proteins of the oxygen-evolving complex and a large number of cofactors. It forms dimeric complexes.

The protein resides in the plastid. It is found in the chloroplast thylakoid membrane. In terms of biological role, found at the monomer-monomer interface of the photosystem II (PS II) dimer, plays a role in assembly and dimerization of PSII. PSII is a light-driven water plastoquinone oxidoreductase, using light energy to abstract electrons from H(2)O, generating a proton gradient subsequently used for ATP formation. The polypeptide is Photosystem II reaction center protein T (Saururus cernuus (Lizard's tail)).